Consider the following 210-residue polypeptide: Outer-membrane lipoprotein LolB (210 aa).

A signal peptide spans 1–18; that stretch reads MKKLTKLLSLTLLFALAG. The N-palmitoyl cysteine moiety is linked to residue Cys-19. Residue Cys-19 is the site of S-diacylglycerol cysteine attachment.

The protein belongs to the LolB family. Monomer.

The protein localises to the cell outer membrane. Its function is as follows. Plays a critical role in the incorporation of lipoproteins in the outer membrane after they are released by the LolA protein. This chain is Outer-membrane lipoprotein LolB, found in Glaesserella parasuis serovar 5 (strain SH0165) (Haemophilus parasuis).